We begin with the raw amino-acid sequence, 310 residues long: Ribosomal RNA small subunit methyltransferase H (310 aa).

S-adenosyl-L-methionine-binding positions include 32 to 34 (GGH), Asp-52, Phe-79, Asp-100, and Gln-107.

This sequence belongs to the methyltransferase superfamily. RsmH family.

It is found in the cytoplasm. The enzyme catalyses cytidine(1402) in 16S rRNA + S-adenosyl-L-methionine = N(4)-methylcytidine(1402) in 16S rRNA + S-adenosyl-L-homocysteine + H(+). Functionally, specifically methylates the N4 position of cytidine in position 1402 (C1402) of 16S rRNA. The sequence is that of Ribosomal RNA small subunit methyltransferase H from Bacillus cereus (strain ATCC 10987 / NRS 248).